The following is a 461-amino-acid chain: Homocitrate synthase (461 aa).

Residues 4–259 (VGILDSTLRE…IEVVKLDKLQ (256 aa)) enclose the Pyruvate carboxyltransferase domain. Residue arginine 12 participates in 2-oxoglutarate binding. Glutamate 13 contributes to the Mg(2+) binding site. Histidine 76, arginine 136, and threonine 170 together coordinate 2-oxoglutarate. Residues histidine 198 and histidine 200 each coordinate Mg(2+). Histidine 292 functions as the Proton acceptor in the catalytic mechanism.

It belongs to the alpha-IPM synthase/homocitrate synthase family. Homocitrate synthase LYS20/LYS21 subfamily. It depends on Mg(2+) as a cofactor. Mn(2+) is required as a cofactor.

The catalysed reaction is acetyl-CoA + 2-oxoglutarate + H2O = (2R)-homocitrate + CoA + H(+). The protein operates within amino-acid biosynthesis; L-lysine biosynthesis via AAA pathway; L-alpha-aminoadipate from 2-oxoglutarate: step 1/5. In terms of biological role, catalyzes the aldol-type condensation of 2-oxoglutarate with acetyl-CoA to yield homocitrate. Carries out the first step of the alpha-aminoadipate (AAA) lysine biosynthesis pathway. The chain is Homocitrate synthase from Saccharolobus islandicus (strain L.S.2.15 / Lassen #1) (Sulfolobus islandicus).